A 363-amino-acid chain; its full sequence is Protein EXORDIUM-like 5 (363 aa).

An N-terminal signal peptide occupies residues 1 to 25; that stretch reads MSSPATTITFFFFFTLSSFFYITSS. An N-linked (GlcNAc...) asparagine glycan is attached at N144.

Belongs to the EXORDIUM family.

Its subcellular location is the secreted. It localises to the extracellular space. The protein resides in the apoplast. In terms of biological role, may play a role in a brassinosteroid-dependent regulation of growth and development. In Arabidopsis thaliana (Mouse-ear cress), this protein is Protein EXORDIUM-like 5 (EXL5).